Reading from the N-terminus, the 205-residue chain is Outer-membrane lipoprotein carrier protein (205 aa).

The N-terminal stretch at 1–19 (MKKIIICFIFVFSINVSFA) is a signal peptide.

Belongs to the LolA family. Monomer.

The protein localises to the periplasm. Its function is as follows. Participates in the translocation of lipoproteins from the inner membrane to the outer membrane. Only forms a complex with a lipoprotein if the residue after the N-terminal Cys is not an aspartate (The Asp acts as a targeting signal to indicate that the lipoprotein should stay in the inner membrane). This chain is Outer-membrane lipoprotein carrier protein, found in Francisella tularensis subsp. tularensis (strain FSC 198).